Reading from the N-terminus, the 437-residue chain is Probable D-serine dehydratase (437 aa).

The residue at position 106 (K106) is an N6-(pyridoxal phosphate)lysine.

This sequence belongs to the serine/threonine dehydratase family. DsdA subfamily. The cofactor is pyridoxal 5'-phosphate.

It catalyses the reaction D-serine = pyruvate + NH4(+). This is Probable D-serine dehydratase from Hahella chejuensis (strain KCTC 2396).